We begin with the raw amino-acid sequence, 881 residues long: Alanine--tRNA ligase (881 aa).

4 residues coordinate Zn(2+): histidine 565, histidine 569, cysteine 672, and histidine 676.

This sequence belongs to the class-II aminoacyl-tRNA synthetase family. It depends on Zn(2+) as a cofactor.

The protein localises to the cytoplasm. The catalysed reaction is tRNA(Ala) + L-alanine + ATP = L-alanyl-tRNA(Ala) + AMP + diphosphate. Catalyzes the attachment of alanine to tRNA(Ala) in a two-step reaction: alanine is first activated by ATP to form Ala-AMP and then transferred to the acceptor end of tRNA(Ala). Also edits incorrectly charged Ser-tRNA(Ala) and Gly-tRNA(Ala) via its editing domain. This is Alanine--tRNA ligase from Novosphingobium aromaticivorans (strain ATCC 700278 / DSM 12444 / CCUG 56034 / CIP 105152 / NBRC 16084 / F199).